The sequence spans 371 residues: Chaperone protein DnaJ (371 aa).

One can recognise a J domain in the interval 5–70; it reads CYYEILNVSK…SKRSRYDQFG (66 aa). The CR-type zinc finger occupies 127 to 204; that stretch reads GVEKEITIPR…CYGNGKVKKQ (78 aa). Zn(2+) is bound by residues Cys140, Cys143, Cys156, Cys159, Cys178, Cys181, Cys192, and Cys195. 4 CXXCXGXG motif repeats span residues 140–147, 156–163, 178–185, and 192–199; these read CDSCDGTG, CHACHGQG, CPVCNGTG, and CDACYGNG.

Belongs to the DnaJ family. In terms of assembly, homodimer. Zn(2+) serves as cofactor.

It is found in the cytoplasm. Functionally, participates actively in the response to hyperosmotic and heat shock by preventing the aggregation of stress-denatured proteins and by disaggregating proteins, also in an autonomous, DnaK-independent fashion. Unfolded proteins bind initially to DnaJ; upon interaction with the DnaJ-bound protein, DnaK hydrolyzes its bound ATP, resulting in the formation of a stable complex. GrpE releases ADP from DnaK; ATP binding to DnaK triggers the release of the substrate protein, thus completing the reaction cycle. Several rounds of ATP-dependent interactions between DnaJ, DnaK and GrpE are required for fully efficient folding. Also involved, together with DnaK and GrpE, in the DNA replication of plasmids through activation of initiation proteins. The sequence is that of Chaperone protein DnaJ from Francisella tularensis subsp. tularensis (strain WY96-3418).